A 184-amino-acid polypeptide reads, in one-letter code: Large ribosomal subunit protein uL5 (184 aa).

This sequence belongs to the universal ribosomal protein uL5 family. As to quaternary structure, part of the 50S ribosomal subunit; part of the 5S rRNA/L5/L18/L25 subcomplex. Contacts the 5S rRNA and the P site tRNA. Forms a bridge to the 30S subunit in the 70S ribosome.

In terms of biological role, this is one of the proteins that bind and probably mediate the attachment of the 5S RNA into the large ribosomal subunit, where it forms part of the central protuberance. In the 70S ribosome it contacts protein S13 of the 30S subunit (bridge B1b), connecting the 2 subunits; this bridge is implicated in subunit movement. Contacts the P site tRNA; the 5S rRNA and some of its associated proteins might help stabilize positioning of ribosome-bound tRNAs. The chain is Large ribosomal subunit protein uL5 from Agrobacterium fabrum (strain C58 / ATCC 33970) (Agrobacterium tumefaciens (strain C58)).